Consider the following 186-residue polypeptide: MIEASKLKAGMTFETADGKLIRVLEASHHKPGKGNTIMRMKLRDVRTGSTFDTSYRPEEKFEQAIIETVPAQYLYKMDDTAYFMNNETYDQYEIPTVNIENELLYILENSEVKIQFYGTEVIGVQIPTTVELTVAETQPSIKGATVTGSGKPATMETGLVVNVPDFIEAGQKLVINTAEGTYVSRA.

It belongs to the elongation factor P family.

It localises to the cytoplasm. The protein operates within protein biosynthesis; polypeptide chain elongation. Its function is as follows. Involved in peptide bond synthesis. Stimulates efficient translation and peptide-bond synthesis on native or reconstituted 70S ribosomes in vitro. Probably functions indirectly by altering the affinity of the ribosome for aminoacyl-tRNA, thus increasing their reactivity as acceptors for peptidyl transferase. This Streptococcus agalactiae serotype Ia (strain ATCC 27591 / A909 / CDC SS700) protein is Elongation factor P.